A 310-amino-acid polypeptide reads, in one-letter code: Thioredoxin reductase (310 aa).

Position 34–41 (34–41 (NGIQPGGQ)) interacts with FAD. Cys-135 and Cys-138 are disulfide-bonded. Position 281-290 (281-290 (DVQDKIYRQA)) interacts with FAD.

Belongs to the class-II pyridine nucleotide-disulfide oxidoreductase family. Homodimer. It depends on FAD as a cofactor.

It localises to the cytoplasm. It catalyses the reaction [thioredoxin]-dithiol + NADP(+) = [thioredoxin]-disulfide + NADPH + H(+). This Rickettsia bellii (strain RML369-C) protein is Thioredoxin reductase (trxB).